The chain runs to 188 residues: Probable thymidylate kinase (188 aa).

Residue 11–18 (GIDGSGKT) coordinates ATP.

This sequence belongs to the thymidylate kinase family.

The enzyme catalyses dTMP + ATP = dTDP + ADP. The sequence is that of Probable thymidylate kinase (tmk) from Methanocaldococcus jannaschii (strain ATCC 43067 / DSM 2661 / JAL-1 / JCM 10045 / NBRC 100440) (Methanococcus jannaschii).